Here is a 232-residue protein sequence, read N- to C-terminus: U-scoloptoxin(11)-Sa3a (232 aa).

The signal sequence occupies residues 1–21 (MFQFCLLILLLAPGRFFSALG).

Belongs to the scoloptoxin-11 family. Contains 8 disulfide bonds. In terms of tissue distribution, expressed by the venom gland.

The protein resides in the secreted. The chain is U-scoloptoxin(11)-Sa3a from Scolopendra alternans (Florida Keys giant centipede).